Consider the following 223-residue polypeptide: Uracil-DNA glycosylase (223 aa).

Asp-67 (proton acceptor) is an active-site residue.

It belongs to the uracil-DNA glycosylase (UDG) superfamily. UNG family.

The protein localises to the cytoplasm. The catalysed reaction is Hydrolyzes single-stranded DNA or mismatched double-stranded DNA and polynucleotides, releasing free uracil.. Excises uracil residues from the DNA which can arise as a result of misincorporation of dUMP residues by DNA polymerase or due to deamination of cytosine. The protein is Uracil-DNA glycosylase of Borrelia duttonii (strain Ly).